The sequence spans 419 residues: MYKKIKGTDDIYGEDMKYWYFIENTAREITRLYGYSEIRTPIFEQTELFVRSVGEETDIVQKEMYTFKDKGDRSITLRPEGTAPTIRAFIENSMVATGLPKRLFYIGPMFRYERPQAGRQRQFHQFGIELIGSSSSLADAEAIVVADRFLKSLGLVDYTIKINSIGCEKCRAEYKKKLKEYYSDKLDKVCDDCKRRYNTNILRLLDCKVDVEYVKDAPKITDYLCDNCKKHYEETKNILDKLDINYEEDPLLVRGLDYYNGIVFEIHHGKLGAQSAIGGGGRYDNLIKELGGQQTPSLGFAMGIERLIIAVKKEGIPVEEIKNNEVFVAHLGESARIEAIKISEELRDNGISVVFNTMERGLSAQLKHASRLNCRLCLIVGENELERNVVILRNMKTGEQIEIERDYIVGTTREWIDEQ.

It belongs to the class-II aminoacyl-tRNA synthetase family. Homodimer.

The protein resides in the cytoplasm. The enzyme catalyses tRNA(His) + L-histidine + ATP = L-histidyl-tRNA(His) + AMP + diphosphate + H(+). This chain is Histidine--tRNA ligase, found in Thermosipho melanesiensis (strain DSM 12029 / CIP 104789 / BI429).